Reading from the N-terminus, the 284-residue chain is Formamidopyrimidine-DNA glycosylase (284 aa).

Catalysis depends on Pro-2, which acts as the Schiff-base intermediate with DNA. The active-site Proton donor is the Glu-3. The Proton donor; for beta-elimination activity role is filled by Lys-58. DNA is bound by residues His-101, Arg-120, and Arg-163. The FPG-type zinc finger occupies 248–284 (RVYDRENAPCVTAGCPDVVRRVVQSGRSSFYCPSCQR). The active-site Proton donor; for delta-elimination activity is Arg-274.

The protein belongs to the FPG family. Monomer. Zn(2+) serves as cofactor.

The enzyme catalyses Hydrolysis of DNA containing ring-opened 7-methylguanine residues, releasing 2,6-diamino-4-hydroxy-5-(N-methyl)formamidopyrimidine.. The catalysed reaction is 2'-deoxyribonucleotide-(2'-deoxyribose 5'-phosphate)-2'-deoxyribonucleotide-DNA = a 3'-end 2'-deoxyribonucleotide-(2,3-dehydro-2,3-deoxyribose 5'-phosphate)-DNA + a 5'-end 5'-phospho-2'-deoxyribonucleoside-DNA + H(+). Its function is as follows. Involved in base excision repair of DNA damaged by oxidation or by mutagenic agents. Acts as a DNA glycosylase that recognizes and removes damaged bases. Has a preference for oxidized purines, such as 7,8-dihydro-8-oxoguanine (8-oxoG). Has AP (apurinic/apyrimidinic) lyase activity and introduces nicks in the DNA strand. Cleaves the DNA backbone by beta-delta elimination to generate a single-strand break at the site of the removed base with both 3'- and 5'-phosphates. In Dinoroseobacter shibae (strain DSM 16493 / NCIMB 14021 / DFL 12), this protein is Formamidopyrimidine-DNA glycosylase.